A 553-amino-acid chain; its full sequence is T-complex protein 1 subunit eta (553 aa).

Gly41 is an ADP binding site. An ATP-binding site is contributed by Gly41. Residue Asp92 coordinates Mg(2+). ADP contacts are provided by Gly93, Thr94, Thr95, Ser96, Ser164, and Ser165. Gly93 contacts ATP. Ser96 lines the ATP pocket. Positions 398 and 409 each coordinate ATP. ADP contacts are provided by Gly409, Glu494, and Arg499. ATP is bound at residue Arg499. The disordered stretch occupies residues 523–553 (PRSTVDAPPGGRGRGRGQTPQPLRPRSVALS). Over residues 539–553 (GQTPQPLRPRSVALS) the composition is skewed to low complexity.

As to quaternary structure, component of the chaperonin-containing T-complex (TRiC), a hexadecamer composed of two identical back-to-back stacked rings enclosing a protein folding chamber. Each ring is made up of eight different subunits: TCP1/CCT1, CCT2, CCT3, CCT4, CCT5, CCT6A/CCT6, CCT7, CCT8.

The protein resides in the cytoplasm. The catalysed reaction is ATP + H2O = ADP + phosphate + H(+). Functionally, component of the chaperonin-containing T-complex (TRiC), a molecular chaperone complex that assists the folding of actin, tubulin and other proteins upon ATP hydrolysis. The chain is T-complex protein 1 subunit eta from Gallus gallus (Chicken).